A 179-amino-acid polypeptide reads, in one-letter code: Large ribosomal subunit protein uL5 (179 aa).

The protein belongs to the universal ribosomal protein uL5 family. As to quaternary structure, part of the 50S ribosomal subunit; part of the 5S rRNA/L5/L18/L25 subcomplex. Contacts the 5S rRNA and the P site tRNA. Forms a bridge to the 30S subunit in the 70S ribosome.

Functionally, this is one of the proteins that bind and probably mediate the attachment of the 5S RNA into the large ribosomal subunit, where it forms part of the central protuberance. In the 70S ribosome it contacts protein S13 of the 30S subunit (bridge B1b), connecting the 2 subunits; this bridge is implicated in subunit movement. Contacts the P site tRNA; the 5S rRNA and some of its associated proteins might help stabilize positioning of ribosome-bound tRNAs. This Staphylococcus epidermidis (strain ATCC 35984 / DSM 28319 / BCRC 17069 / CCUG 31568 / BM 3577 / RP62A) protein is Large ribosomal subunit protein uL5.